Here is a 413-residue protein sequence, read N- to C-terminus: Transposon Ty4-H Gag polyprotein (413 aa).

Residues 39–115 (RKVSIKDEQV…IQLLETNENN (77 aa)) are a coiled coil. The disordered stretch occupies residues 380–413 (RQQQLKSSAKRTKVLEQDTKKVKQSVQQQKTGNY). Over residues 403 to 413 (QSVQQQKTGNY) the composition is skewed to low complexity.

In terms of biological role, capsid protein (CA) is the structural component of the virus-like particle (VLP), forming the shell that encapsulates the retrotransposons dimeric RNA genome. The protein is Transposon Ty4-H Gag polyprotein (TY4A-H) of Saccharomyces cerevisiae (strain ATCC 204508 / S288c) (Baker's yeast).